Here is a 195-residue protein sequence, read N- to C-terminus: CASP-like protein 1B2 (195 aa).

Residues 1–25 (MDLEKGKKPSEQAAACRIMQVKDKL) lie on the Cytoplasmic side of the membrane. A helical membrane pass occupies residues 26–46 (ITLQPVVRACVFLATAVAAVI). Topologically, residues 47–78 (MGLNKQSYTTVVAIVGTRPVTQTFTAKFKDTP) are extracellular. A helical membrane pass occupies residues 79-99 (AFVFFVIANAIASGYNLMVLV). Over 100 to 114 (TRRILQRRAQSLSVH) the chain is Cytoplasmic. A helical membrane pass occupies residues 115 to 135 (LLDMVILTLLATGSATAASMA). Over 136–160 (QLGKNGNLHARWNPICDKFGSFCNH) the chain is Extracellular. A helical membrane pass occupies residues 161–181 (GGIALVSSFIGVALMLALNLL). Over 182 to 195 (SAAANSPRSNVTGQ) the chain is Cytoplasmic.

The protein belongs to the Casparian strip membrane proteins (CASP) family. Homodimer and heterodimers.

It localises to the cell membrane. In Oryza sativa subsp. indica (Rice), this protein is CASP-like protein 1B2.